Reading from the N-terminus, the 88-residue chain is Small ribosomal subunit protein bS20 (88 aa).

The segment at 1 to 27 (MANSKSAKKRALQSEKRRQHNASRRSM) is disordered.

The protein belongs to the bacterial ribosomal protein bS20 family.

Its function is as follows. Binds directly to 16S ribosomal RNA. This chain is Small ribosomal subunit protein bS20, found in Shewanella woodyi (strain ATCC 51908 / MS32).